A 228-amino-acid chain; its full sequence is Ribonuclease 3 (228 aa).

Residues 5–127 (LMALQARLQH…VIGAVYLDAG (123 aa)) enclose the RNase III domain. Glu-40 contacts Mg(2+). Asp-44 is an active-site residue. Mg(2+)-binding residues include Asp-113 and Glu-116. The active site involves Glu-116. The DRBM domain maps to 154-224 (DPKTELQEWL…AAAMLQTLKA (71 aa)).

This sequence belongs to the ribonuclease III family. As to quaternary structure, homodimer. The cofactor is Mg(2+).

It localises to the cytoplasm. The enzyme catalyses Endonucleolytic cleavage to 5'-phosphomonoester.. Its function is as follows. Digests double-stranded RNA. Involved in the processing of primary rRNA transcript to yield the immediate precursors to the large and small rRNAs (23S and 16S). Processes some mRNAs, and tRNAs when they are encoded in the rRNA operon. Processes pre-crRNA and tracrRNA of type II CRISPR loci if present in the organism. The polypeptide is Ribonuclease 3 (Albidiferax ferrireducens (strain ATCC BAA-621 / DSM 15236 / T118) (Rhodoferax ferrireducens)).